The chain runs to 594 residues: Alanine--tRNA ligase (594 aa).

His-456, His-460, Cys-558, and His-562 together coordinate Zn(2+).

The protein belongs to the class-II aminoacyl-tRNA synthetase family. The cofactor is Zn(2+).

Its subcellular location is the cytoplasm. It catalyses the reaction tRNA(Ala) + L-alanine + ATP = L-alanyl-tRNA(Ala) + AMP + diphosphate. Catalyzes the attachment of alanine to tRNA(Ala) in a two-step reaction: alanine is first activated by ATP to form Ala-AMP and then transferred to the acceptor end of tRNA(Ala). Also edits incorrectly charged Ser-tRNA(Ala) and Gly-tRNA(Ala) via its editing domain. This Borrelia garinii subsp. bavariensis (strain ATCC BAA-2496 / DSM 23469 / PBi) (Borreliella bavariensis) protein is Alanine--tRNA ligase (alaS).